The sequence spans 275 residues: Small ribosomal subunit protein uS3 (275 aa).

One can recognise a KH type-2 domain in the interval 38-106 (IRRMMTSGME…QVQLNILEVK (69 aa)). Low complexity predominate over residues 216–228 (NAAARAGNRPARG). Residues 216 to 275 (NAAARAGNRPARGGADRPARGGRGGERGGRGRKPQQAPAAEAPKAEAPAAAPAESTGTEA) are disordered. The span at 229–244 (GADRPARGGRGGERGG) shows a compositional bias: basic and acidic residues. Low complexity predominate over residues 249 to 268 (PQQAPAAEAPKAEAPAAAPA).

This sequence belongs to the universal ribosomal protein uS3 family. As to quaternary structure, part of the 30S ribosomal subunit. Forms a tight complex with proteins S10 and S14.

Binds the lower part of the 30S subunit head. Binds mRNA in the 70S ribosome, positioning it for translation. In Streptomyces avermitilis (strain ATCC 31267 / DSM 46492 / JCM 5070 / NBRC 14893 / NCIMB 12804 / NRRL 8165 / MA-4680), this protein is Small ribosomal subunit protein uS3.